The sequence spans 1320 residues: Bifunctional protein PutA (1320 aa).

Residues 228–574 (LSRSLNRIIG…SFVNRIADTS (347 aa)) form a proline dehydrogenase region. Residues 653–1119 (QPVAAGEMSP…LANRPESALA (467 aa)) form an aldehyde dehydrogenase region. Active-site residues include Glu883 and Cys917.

This sequence in the N-terminal section; belongs to the proline dehydrogenase family. In the C-terminal section; belongs to the aldehyde dehydrogenase family. In terms of assembly, homodimer. It depends on FAD as a cofactor.

It carries out the reaction L-proline + a quinone = (S)-1-pyrroline-5-carboxylate + a quinol + H(+). The enzyme catalyses L-glutamate 5-semialdehyde + NAD(+) + H2O = L-glutamate + NADH + 2 H(+). It participates in amino-acid degradation; L-proline degradation into L-glutamate; L-glutamate from L-proline: step 1/2. It functions in the pathway amino-acid degradation; L-proline degradation into L-glutamate; L-glutamate from L-proline: step 2/2. Its function is as follows. Oxidizes proline to glutamate for use as a carbon and nitrogen source and also function as a transcriptional repressor of the put operon. This chain is Bifunctional protein PutA (putA), found in Escherichia coli (strain K12).